The chain runs to 1127 residues: Ras guanine nucleotide exchange factor F (1127 aa).

Disordered regions lie at residues 1–82 (MTDK…SLLN) and 96–154 (NSGG…SSSS). Low complexity-rich tracts occupy residues 23–53 (NQPS…TTSP) and 67–82 (NNNN…SLLN). Over residues 122–132 (RTSTTLAQFSG) the composition is skewed to polar residues. A compositionally biased stretch (low complexity) spans 133-154 (SSLPNTENSSPPPSSSLISSSS). Kelch repeat units follow at residues 212-261 (GFYL…LYNN), 262-311 (SMYI…VESG), 313-366 (MIVF…MHKG), 367-418 (NMYV…LFQD), and 420-469 (IFIS…VKGN). The LisH domain maps to 557-589 (SHQFVLQLIMEYLERNTYHKVIAAIQKESGVLH). One can recognise an N-terminal Ras-GEF domain in the interval 673 to 804 (NKVQIKAATF…KLRELKKKLQ (132 aa)). The 228-residue stretch at 835 to 1062 (DELEIARQMT…YDLNLLSESL (228 aa)) folds into the Ras-GEF domain. The tract at residues 1090–1127 (LGSARELNNSNRDSNNITGSSSNNNSNSSNSLSPIVKL) is disordered. Residues 1103-1127 (SNNITGSSSNNNSNSSNSLSPIVKL) are compositionally biased toward low complexity.

Promotes the exchange of Ras-bound GDP by GTP. This chain is Ras guanine nucleotide exchange factor F (gefF), found in Dictyostelium discoideum (Social amoeba).